The following is a 339-amino-acid chain: UDP-galactose transporter homolog 1 (339 aa).

Residues 1 to 4 are Lumenal-facing; the sequence is MAGS. Residues 5 to 25 form a helical membrane-spanning segment; sequence TSSLVICAIGIYATFLTWALV. Over 26 to 42 the chain is Cytoplasmic; that stretch reads QEPLATRTWPNSMGKFQ. A helical membrane pass occupies residues 43–63; it reads FPNVISLIQASVAMMMGYLYL. Residues 64–106 are Lumenal-facing; the sequence is NWKKVEYPPRKMIKDHWKQLMLISFTQSSSGPLATTSLKHVDY. A helical membrane pass occupies residues 107 to 127; that stretch reads LTYMLAKSCKMIPVLLVHLLL. At 128-136 the chain is on the cytoplasmic side; it reads YRTPIASQK. Residues 137-157 traverse the membrane as a helical segment; sequence KVVALLVSLGVTIFTIGGNDG. Residues 158 to 174 are Lumenal-facing; that stretch reads KKLKRSFNESGNDNKLQ. Residue N165 is glycosylated (N-linked (GlcNAc...) asparagine). Residues 175–192 traverse the membrane as a helical segment; sequence GFGLLFSSLFLDGLTNAT. Residues 193 to 214 are Cytoplasmic-facing; the sequence is QDKLLKANKAKEKGKQTLITGA. Residues 215 to 235 traverse the membrane as a helical segment; that stretch reads HLMFTLNLFVILWNILYFIVI. The Lumenal segment spans residues 236–245; it reads DCKQWDNAVS. The chain crosses the membrane as a helical span at residues 246–266; that stretch reads VLTMDPQVWGYLMLYSFCGAM. Residues 267–280 lie on the Cytoplasmic side of the membrane; it reads GQCFIFYTLEQFGS. A helical membrane pass occupies residues 281-303; it reads LVLIMITVTRKMVSMILSIIVFG. Residues 304–307 are Lumenal-facing; sequence KSVR. The chain crosses the membrane as a helical span at residues 308-327; sequence FQQWVGMFIVFGGITWEALN. Residues 328–339 lie on the Cytoplasmic side of the membrane; that stretch reads KKKANIPKAKSA.

It belongs to the nucleotide-sugar transporter family. SLC35B subfamily.

It localises to the endoplasmic reticulum membrane. May be involved in specific transport of UDP-Gal from the cytosol to the Golgi lumen. Involved in the maintenance of optimal conditions for the folding of secretory pathway proteins in the endoplasmic reticulum. Overexpression confers resistance to the immunosuppressive drug, leflunomide. This Saccharomyces cerevisiae (strain ATCC 204508 / S288c) (Baker's yeast) protein is UDP-galactose transporter homolog 1 (HUT1).